A 241-amino-acid polypeptide reads, in one-letter code: Probable porphobilinogen deaminase (241 aa).

The protein belongs to the HMBS family.

It catalyses the reaction 4 porphobilinogen + H2O = hydroxymethylbilane + 4 NH4(+). The protein operates within porphyrin-containing compound metabolism; protoporphyrin-IX biosynthesis; coproporphyrinogen-III from 5-aminolevulinate: step 2/4. Its function is as follows. Tetrapolymerization of the monopyrrole PBG into the hydroxymethylbilane pre-uroporphyrinogen in several discrete steps. In Chlamydia trachomatis serovar D (strain ATCC VR-885 / DSM 19411 / UW-3/Cx), this protein is Probable porphobilinogen deaminase (hemC).